We begin with the raw amino-acid sequence, 190 residues long: Peptidyl-tRNA hydrolase (190 aa).

Tyrosine 18 lines the tRNA pocket. The active-site Proton acceptor is histidine 23. Residues phenylalanine 65, asparagine 67, and asparagine 113 each contribute to the tRNA site.

Belongs to the PTH family. As to quaternary structure, monomer.

Its subcellular location is the cytoplasm. The catalysed reaction is an N-acyl-L-alpha-aminoacyl-tRNA + H2O = an N-acyl-L-amino acid + a tRNA + H(+). Hydrolyzes ribosome-free peptidyl-tRNAs (with 1 or more amino acids incorporated), which drop off the ribosome during protein synthesis, or as a result of ribosome stalling. In terms of biological role, catalyzes the release of premature peptidyl moieties from peptidyl-tRNA molecules trapped in stalled 50S ribosomal subunits, and thus maintains levels of free tRNAs and 50S ribosomes. The chain is Peptidyl-tRNA hydrolase from Akkermansia muciniphila (strain ATCC BAA-835 / DSM 22959 / JCM 33894 / BCRC 81048 / CCUG 64013 / CIP 107961 / Muc).